Reading from the N-terminus, the 364-residue chain is Anthranilate N-methyltransferase (364 aa).

Residues 1 to 20 (MGSLSESHTQYKHGVEVEED) form a disordered region. Gly-209, Asp-232, Met-253, and Lys-266 together coordinate S-adenosyl-L-methionine. The active-site Proton acceptor is His-270.

This sequence belongs to the class I-like SAM-binding methyltransferase superfamily. Cation-independent O-methyltransferase family. COMT subfamily. Homodimer. In terms of tissue distribution, expressed in leaves, flowers, stems and roots. Detected in the vascular tissues in stems, in the rhizodermis or the endodermis of roots, in the inside of carpels, in the central vascular bundles of the syncarp ovary and in the secretory oil glands located around the outer ovary wall.

The catalysed reaction is anthranilate + S-adenosyl-L-methionine = N-methylanthranilate + S-adenosyl-L-homocysteine + H(+). With respect to regulation, inhibited by Ca(2+), Co(2+), Fe(2+), Fe(3+), Cu(2+) or Zn(2+). No effect of Mg(2+). Involved in the biosynthesis of acridine alkaloids. N-methyltransferase with a strict substrate specificity for anthranilate. No activity with anthranilic acid methyl ester, anthraniloyl CoA, 3- or 4-amino-benzoic acid, salicylic acid, catechol, eugenol, caffeic acid, quercetin, theobromin, theophyllin, putrescine and nicotinic acid among others. The polypeptide is Anthranilate N-methyltransferase (Ruta graveolens (Common rue)).